The sequence spans 189 residues: GMP synthase [glutamine-hydrolyzing] subunit A (189 aa).

Positions 3–187 (RIDVIDNHGQ…LSVCDQQSVA (185 aa)) constitute a Glutamine amidotransferase type-1 domain. Cysteine 73 acts as the Nucleophile in catalysis. Catalysis depends on residues histidine 161 and glutamate 163.

In terms of assembly, heterodimer composed of a glutamine amidotransferase subunit (A) and a GMP-binding subunit (B).

The enzyme catalyses XMP + L-glutamine + ATP + H2O = GMP + L-glutamate + AMP + diphosphate + 2 H(+). Its pathway is purine metabolism; GMP biosynthesis; GMP from XMP (L-Gln route): step 1/1. Catalyzes the synthesis of GMP from XMP. The polypeptide is GMP synthase [glutamine-hydrolyzing] subunit A (Haloarcula marismortui (strain ATCC 43049 / DSM 3752 / JCM 8966 / VKM B-1809) (Halobacterium marismortui)).